A 236-amino-acid chain; its full sequence is 15,16-dihydrobiliverdin:ferredoxin oxidoreductase (236 aa).

This sequence belongs to the HY2 family.

The enzyme catalyses 15,16-dihydrobiliverdin + oxidized 2[4Fe-4S]-[ferredoxin] = biliverdin IXalpha + reduced 2[4Fe-4S]-[ferredoxin] + 2 H(+). Functionally, catalyzes the two-electron reduction of biliverdin IX-alpha at the C15 methine bridge. The polypeptide is 15,16-dihydrobiliverdin:ferredoxin oxidoreductase (Prochlorococcus marinus (strain AS9601)).